Consider the following 174-residue polypeptide: ATP-dependent protease subunit HslV (174 aa).

T2 is a catalytic residue. Residues A157, C160, and T163 each contribute to the Na(+) site.

It belongs to the peptidase T1B family. HslV subfamily. A double ring-shaped homohexamer of HslV is capped on each side by a ring-shaped HslU homohexamer. The assembly of the HslU/HslV complex is dependent on binding of ATP.

It is found in the cytoplasm. The catalysed reaction is ATP-dependent cleavage of peptide bonds with broad specificity.. With respect to regulation, allosterically activated by HslU binding. Its function is as follows. Protease subunit of a proteasome-like degradation complex believed to be a general protein degrading machinery. In Shewanella baltica (strain OS195), this protein is ATP-dependent protease subunit HslV.